Consider the following 157-residue polypeptide: Deoxyuridine 5'-triphosphate nucleotidohydrolase (157 aa).

Substrate contacts are provided by residues 73 to 75, Asn-86, and 90 to 92; these read RSG and TID.

It belongs to the dUTPase family. Mg(2+) is required as a cofactor.

It catalyses the reaction dUTP + H2O = dUMP + diphosphate + H(+). Its pathway is pyrimidine metabolism; dUMP biosynthesis; dUMP from dCTP (dUTP route): step 2/2. Its function is as follows. This enzyme is involved in nucleotide metabolism: it produces dUMP, the immediate precursor of thymidine nucleotides and it decreases the intracellular concentration of dUTP so that uracil cannot be incorporated into DNA. This is Deoxyuridine 5'-triphosphate nucleotidohydrolase from Azorhizobium caulinodans (strain ATCC 43989 / DSM 5975 / JCM 20966 / LMG 6465 / NBRC 14845 / NCIMB 13405 / ORS 571).